The sequence spans 65 residues: Vespid chemotactic peptide 5h (65 aa).

Residues 1–23 (MKYNIVFLFAIIASLACLQLTFA) form the signal peptide. AXPX repeat units follow at residues 23–26 (AAPA), 27–30 (ASPL), 31–34 (ANPG), 35–38 (ASPD), 39–42 (AAPN), 43–46 (ADPL), and 47–50 (ADPF). Residues 24–49 (APAASPLANPGASPDAAPNADPLADP) constitute a propeptide that is removed on maturation. A Leucine amide modification is found at leucine 62.

The protein belongs to the MCD family. Crabrolin subfamily. Expressed by the venom gland.

The protein resides in the secreted. Functionally, shows antimicrobial activity against the Gram-negative bacteria E.coli ATCC 25922 (MIC=30 ug/ml), the Gram-positive bacteria S.aureus ATCC 2592 (MIC=5 ug/ml) and the fungus C.albicans ATCC 2002 (MIC=25 ug/ml). Acts as a mast cell degranulating peptide. Its mast cell degranulation activity may be related to the activation of G-protein coupled receptors in mast cells as well as interaction with other proteins located in cell endosomal membranes in the mast cells. Induces the chemotaxis of neutrophils. This is Vespid chemotactic peptide 5h from Vespa magnifica (Hornet).